The chain runs to 272 residues: Elongation factor Ts (272 aa).

An involved in Mg(2+) ion dislocation from EF-Tu region spans residues 76 to 79 (TDFV).

It belongs to the EF-Ts family.

Its subcellular location is the cytoplasm. Functionally, associates with the EF-Tu.GDP complex and induces the exchange of GDP to GTP. It remains bound to the aminoacyl-tRNA.EF-Tu.GTP complex up to the GTP hydrolysis stage on the ribosome. The polypeptide is Elongation factor Ts (Corynebacterium jeikeium (strain K411)).